The following is a 448-amino-acid chain: Glucose-6-phosphate isomerase (448 aa).

The active-site Proton donor is Glu290. Residues His311 and Lys425 contribute to the active site.

It belongs to the GPI family.

It is found in the cytoplasm. It catalyses the reaction alpha-D-glucose 6-phosphate = beta-D-fructose 6-phosphate. The protein operates within carbohydrate biosynthesis; gluconeogenesis. It functions in the pathway carbohydrate degradation; glycolysis; D-glyceraldehyde 3-phosphate and glycerone phosphate from D-glucose: step 2/4. Catalyzes the reversible isomerization of glucose-6-phosphate to fructose-6-phosphate. The sequence is that of Glucose-6-phosphate isomerase from Acetivibrio thermocellus (strain ATCC 27405 / DSM 1237 / JCM 9322 / NBRC 103400 / NCIMB 10682 / NRRL B-4536 / VPI 7372) (Clostridium thermocellum).